The following is a 165-amino-acid chain: uncharacterized protein (165 aa).

Residues 76 to 161 (LEQVESALDD…LKRLIREKLT (86 aa)) form the RCK C-terminal domain.

This is an uncharacterized protein from Bacillus subtilis (strain 168).